Consider the following 30-residue polypeptide: Methanobactin mb-OB3b (30 aa).

The propeptide occupies 1 to 19 (MTVKIAQKKVLPVIGRAAA). Positions 20–21 (LC) form a cross-link, 2-(3-methylbutanoyl)-5-hydroxyoxazole-4-carbothionic acid (Leu-Cys). Positions 21 and 27 each coordinate Cu(2+). C24 and C29 are oxidised to a cystine. The proline 5-hydroxy-oxazole-4-carbothionic acid (Pro-Cys) cross-link spans 26–27 (PC).

Monomer. In the absence of copper, may exist as a dimer or an oligomer.

It is found in the secreted. Its subcellular location is the cytoplasm. It catalyses the reaction 2 superoxide + 2 H(+) = H2O2 + O2. Chalkophore involved in scavenging, uptake and suppression of toxicity of copper. Each apo-methanobactin (apo-mb) complexes 1 Cu(2+) or Cu(1+) ion to form Cu(1+)-mb (Cu-mb) which is then taken up by the cell. Enhances growth rate in the presence of copper and reduces growth lag upon exposition to elevated levels of copper. Cu-mb contributes to the switchover from soluble methane monooxygenase (sMMO) to the membrane-bound particulate MMO (pMMO) by inducing transcription of pMMO subunit A. It also stimulates the enzymatic activity of pMMO. In the absence of copper, binds other metal ions, like Zn(2+), Ag(1+), Au(3+), Co(2+), Cd(2+), Fe(3+), Hg(2+), Mn(2+), Ni(2+), Pb(2+) or U(6+), but not Ba(2+), Ca(2+), La(2+), Mg(2+) or Sr(2+). Uptake is an active process, which may involve TonB-dependent transporters, and as such does not involve porins. Cu-Mb can be taken up by other methanotrophic bacteria but not by E.coli. Has Cu-dependent superoxide dismutase-like activity. Shows reductant-dependent oxidase and hydrogen peroxide reductase activities. Reduces copper-levels in liver in a rat model of Wilson disease. This Methylosinus trichosporium protein is Methanobactin mb-OB3b.